We begin with the raw amino-acid sequence, 358 residues long: MGKASGLLLFLLGFGFFVVTYNLLTLIVHNRSGVSNSDGSPLLDPVVQMPLNIRKAKSSPAPFHVALTATDAPYNKWQCRIMYYWYKQKKALPGSDMGGFTRILHSGNSDNLMDEIPTFVVDPLPPGLDRGYVVLNRPWAFVQWLERATIKEDYVLMAEPDHVFVNPLPNLAVGGFPAAFPFFYITPEKYENIVRKYYPAEMGPVTNIDPIGNSPVIISKESLEKIAPTWMNVSLTMKNDPETDKAFGWVLEMYGYAIASAIHGVRHILRKDFMLQPPWDLSTKGKFIIHYTYGCDYNMKGELTYGKIGEWRFDKRSHLRGPPPRNMSLPPPGVPESVVTLVKMVNEATATIPNWDTL.

The helical; Signal-anchor transmembrane segment at 8 to 28 (LLFLLGFGFFVVTYNLLTLIV) threads the bilayer.

As to expression, ubiquitous.

The protein localises to the golgi apparatus. Its subcellular location is the cis-Golgi network membrane. The enzyme catalyses trans-4-hydroxy-L-prolyl-[protein] + UDP-beta-L-arabinofuranose = O-(beta-L-arabinofuranosyl)-trans-4-hydroxy-L-prolyl-[protein] + UDP + H(+). Glycosyltransferase involved in the O-arabinosylation of several proteins including extensins and small signaling peptides. Catalyzes the transfer of the initial L-arabinose to the hydroxyl group of Hyp residues. Contributes redundantly with HPAT1 and HPAT2 to arabinosylation of EXT3, but main contributor to arabinosylation of CLE peptides. The sequence is that of Hydroxyproline O-arabinosyltransferase 3 from Arabidopsis thaliana (Mouse-ear cress).